A 619-amino-acid chain; its full sequence is Kinesin light chain 4 (619 aa).

S2 is subject to N-acetylserine. One copy of the TPR 1 repeat lies at 55–88 (QQGGHEEGLVHEKARQLRRSMENIELGLSEAQVM). Positions 65 to 155 (HEKARQLRRS…HLEFLRQLRQ (91 aa)) form a coiled coil. The segment covering 156–175 (YDEDGHGMEEKEGEATKDSL) has biased composition (basic and acidic residues). The segment at 156–199 (YDEDGHGMEEKEGEATKDSLDDLFPNEEEEDSGNDLSRGQGAAA) is disordered. S174 carries the phosphoserine modification. Positions 179-188 (FPNEEEEDSG) are enriched in acidic residues. 5 TPR repeats span residues 211–244 (LRTL…LERT), 253–286 (ATML…REST), 295–328 (AATL…REKV), 337–370 (AKQL…YESQ), and 379–412 (ARTK…AHVQ). S460 bears the Phosphoserine mark. A TPR 7 repeat occupies 464 to 497 (NTTLKNLGALYRRQGKLEAAETLEECALRSRKQG). S565, S566, and S590 each carry phosphoserine. The tract at residues 571–619 (RKLQGTEPRPSSSSMKRAASLNYLNQPNAAPLQVSRGLSASTVDLSSSS) is disordered. Residues 609 to 619 (SASTVDLSSSS) show a composition bias toward low complexity. Position 612 is a phosphothreonine (T612).

The protein belongs to the kinesin light chain family. In terms of assembly, oligomeric complex composed of two heavy chains and two light chains.

The protein resides in the cytoplasm. Its subcellular location is the cytoskeleton. Functionally, kinesin is a microtubule-associated force-producing protein that may play a role in organelle transport. The light chain may function in coupling of cargo to the heavy chain or in the modulation of its ATPase activity. The chain is Kinesin light chain 4 (Klc4) from Mus musculus (Mouse).